Consider the following 421-residue polypeptide: Glucan 1,3-beta-glucosidase (421 aa).

The N-terminal stretch at 1–15 (MKLTKLVALAGAALA) is a signal peptide. The Proton donor role is filled by Glu-213. Cystine bridges form between Cys-296–Cys-419 and Cys-321–Cys-347. Glu-313 acts as the Nucleophile in catalysis.

This sequence belongs to the glycosyl hydrolase 5 (cellulase A) family.

The protein localises to the secreted. The catalysed reaction is Successive hydrolysis of beta-D-glucose units from the non-reducing ends of (1-&gt;3)-beta-D-glucans, releasing alpha-glucose.. The protein is Glucan 1,3-beta-glucosidase (EXG1) of Yarrowia lipolytica (strain CLIB 122 / E 150) (Yeast).